A 101-amino-acid chain; its full sequence is Replication restart protein PriB (101 aa).

Residues 1–101 form the SSB domain; sequence MTTNNLVLSG…IHAENVELKT (101 aa).

Belongs to the PriB family. In terms of assembly, homodimer. Interacts with PriA and DnaT. Component of the replication restart primosome. Primosome assembly occurs via a 'hand-off' mechanism. PriA binds to replication forks, subsequently PriB then DnaT bind; DnaT then displaces ssDNA to generate the helicase loading substrate.

Its function is as follows. Involved in the restart of stalled replication forks, which reloads the replicative helicase on sites other than the origin of replication; the PriA-PriB pathway is the major replication restart pathway. During primosome assembly it facilitates complex formation between PriA and DnaT on DNA; stabilizes PriA on DNA. Stimulates the DNA unwinding activity of PriA helicase. The protein is Replication restart protein PriB of Shewanella baltica (strain OS223).